A 457-amino-acid chain; its full sequence is Dihydrolipoyl dehydrogenase (457 aa).

FAD is bound by residues 32–40 (EKQYFGGVC), lysine 49, and alanine 113. The cysteines at positions 40 and 45 are disulfide-linked. Residues 178–182 (GGGVI), valine 235, and 262–265 (SIGR) contribute to the NAD(+) site. FAD-binding residues include aspartate 303 and alanine 311. The Proton acceptor role is filled by histidine 437.

This sequence belongs to the class-I pyridine nucleotide-disulfide oxidoreductase family. Homodimer. FAD is required as a cofactor.

The protein resides in the cytoplasm. The enzyme catalyses N(6)-[(R)-dihydrolipoyl]-L-lysyl-[protein] + NAD(+) = N(6)-[(R)-lipoyl]-L-lysyl-[protein] + NADH + H(+). In terms of biological role, lipoamide dehydrogenase is a component of the alpha-ketoacid dehydrogenase complexes. The sequence is that of Dihydrolipoyl dehydrogenase (pdhD) from Mycoplasma genitalium (strain ATCC 33530 / DSM 19775 / NCTC 10195 / G37) (Mycoplasmoides genitalium).